The following is a 103-amino-acid chain: Large ribosomal subunit protein uL24 (103 aa).

Belongs to the universal ribosomal protein uL24 family. Part of the 50S ribosomal subunit.

Its function is as follows. One of two assembly initiator proteins, it binds directly to the 5'-end of the 23S rRNA, where it nucleates assembly of the 50S subunit. Functionally, one of the proteins that surrounds the polypeptide exit tunnel on the outside of the subunit. The polypeptide is Large ribosomal subunit protein uL24 (Bacillus licheniformis (strain ATCC 14580 / DSM 13 / JCM 2505 / CCUG 7422 / NBRC 12200 / NCIMB 9375 / NCTC 10341 / NRRL NRS-1264 / Gibson 46)).